The primary structure comprises 341 residues: uncharacterized protein (341 aa).

A disordered region spans residues 125–146 (DTVKHNGSGPRPEQASSHVHYS).

Belongs to the cycloisomerase 2 family.

This is an uncharacterized protein from Lactococcus lactis subsp. cremoris (strain MG1363).